Reading from the N-terminus, the 430-residue chain is 3-phosphoshikimate 1-carboxyvinyltransferase (430 aa).

3-phosphoshikimate-binding residues include Lys20, Ser21, and Arg25. Residue Lys20 coordinates phosphoenolpyruvate. Positions 90 and 118 each coordinate phosphoenolpyruvate. Residues Ser163, Ser164, Gln165, Ser191, Asp311, and Lys338 each coordinate 3-phosphoshikimate. Residue Gln165 participates in phosphoenolpyruvate binding. Residue Asp311 is the Proton acceptor of the active site. Residues Arg342 and Arg383 each contribute to the phosphoenolpyruvate site.

Belongs to the EPSP synthase family. Monomer.

The protein resides in the cytoplasm. It carries out the reaction 3-phosphoshikimate + phosphoenolpyruvate = 5-O-(1-carboxyvinyl)-3-phosphoshikimate + phosphate. The protein operates within metabolic intermediate biosynthesis; chorismate biosynthesis. Catalyzes the transfer of the enolpyruvyl moiety of phosphoenolpyruvate (PEP) to the 5-hydroxyl of shikimate-3-phosphate (S3P) to produce enolpyruvyl shikimate-3-phosphate and inorganic phosphate. This chain is 3-phosphoshikimate 1-carboxyvinyltransferase, found in Methanosarcina mazei (strain ATCC BAA-159 / DSM 3647 / Goe1 / Go1 / JCM 11833 / OCM 88) (Methanosarcina frisia).